The sequence spans 507 residues: ATP synthase subunit alpha, chloroplastic (507 aa).

170–177 (GDRQTGKT) lines the ATP pocket. Position 257 is a phosphothreonine (Thr-257).

It belongs to the ATPase alpha/beta chains family. F-type ATPases have 2 components, CF(1) - the catalytic core - and CF(0) - the membrane proton channel. CF(1) has five subunits: alpha(3), beta(3), gamma(1), delta(1), epsilon(1). CF(0) has four main subunits: a, b, b' and c.

The protein resides in the plastid. The protein localises to the chloroplast thylakoid membrane. The catalysed reaction is ATP + H2O + 4 H(+)(in) = ADP + phosphate + 5 H(+)(out). Functionally, produces ATP from ADP in the presence of a proton gradient across the membrane. The alpha chain is a regulatory subunit. This is ATP synthase subunit alpha, chloroplastic from Barbarea verna (Land cress).